Here is a 155-residue protein sequence, read N- to C-terminus: Small ribosomal subunit protein uS9 (155 aa).

It belongs to the universal ribosomal protein uS9 family.

This chain is Small ribosomal subunit protein uS9, found in Rhizobium johnstonii (strain DSM 114642 / LMG 32736 / 3841) (Rhizobium leguminosarum bv. viciae).